Here is a 196-residue protein sequence, read N- to C-terminus: MPKVGMQPIRRSQLIAATLEAVDQVGMADASIAYIARLAGVSNGIISHYFNDKNGLLEATMRHLMQALSAAVGKRRRALDEDSPRAHLRAMIDGNFDDSQVSGPAMKTWLAFWASSMHQPALRRLQRVNDHRLYSNLCGQFRRVLPQDQARFAARGLASLIDGLWLRGALSGEAFDTEQARRIAYDYLDLQLNKAR.

Residues 8 to 68 (PIRRSQLIAA…ATMRHLMQAL (61 aa)) enclose the HTH tetR-type domain. Residues 31–50 (SIAYIARLAGVSNGIISHYF) constitute a DNA-binding region (H-T-H motif).

The protein operates within amine and polyamine biosynthesis; betaine biosynthesis via choline pathway [regulation]. Functionally, repressor involved in the biosynthesis of the osmoprotectant glycine betaine. It represses transcription of the choline transporter BetT and the genes of BetAB involved in the synthesis of glycine betaine. In Ectopseudomonas mendocina (strain ymp) (Pseudomonas mendocina), this protein is HTH-type transcriptional regulator BetI.